Reading from the N-terminus, the 336-residue chain is Flap endonuclease 1 (336 aa).

The segment at Met-1–Lys-98 is N-domain. Mg(2+) contacts are provided by Asp-27, Asp-80, Glu-150, Glu-152, Asp-171, Asp-173, and Asp-234. An I-domain region spans residues Asp-114–Gly-255. The segment at Gly-328 to Leu-336 is interaction with PCNA.

It belongs to the XPG/RAD2 endonuclease family. FEN1 subfamily. In terms of assembly, interacts with PCNA. PCNA stimulates the nuclease activity without altering cleavage specificity. It depends on Mg(2+) as a cofactor.

Its function is as follows. Structure-specific nuclease with 5'-flap endonuclease and 5'-3' exonuclease activities involved in DNA replication and repair. During DNA replication, cleaves the 5'-overhanging flap structure that is generated by displacement synthesis when DNA polymerase encounters the 5'-end of a downstream Okazaki fragment. Binds the unpaired 3'-DNA end and kinks the DNA to facilitate 5' cleavage specificity. Cleaves one nucleotide into the double-stranded DNA from the junction in flap DNA, leaving a nick for ligation. Also involved in the base excision repair (BER) pathway. Acts as a genome stabilization factor that prevents flaps from equilibrating into structures that lead to duplications and deletions. Also possesses 5'-3' exonuclease activity on nicked or gapped double-stranded DNA. This is Flap endonuclease 1 from Methanothrix thermoacetophila (strain DSM 6194 / JCM 14653 / NBRC 101360 / PT) (Methanosaeta thermophila).